A 726-amino-acid polypeptide reads, in one-letter code: Amino-acid acetyltransferase, mitochondrial (726 aa).

Over residues 1-18 (MSSRTLVGLRSTTSTHLQ) the composition is skewed to polar residues. A mitochondrion-targeting transit peptide spans 1–44 (MSSRTLVGLRSTTSTHLQRSGVAAAAAVSSSSTSSSGSAPRRCL). The segment at 1-64 (MSSRTLVGLR…SAEFSSSSKS (64 aa)) is disordered. Positions 20–39 (SGVAAAAAVSSSSTSSSGSA) are enriched in low complexity. Residues 45 to 58 (SSASGRQVQQSAEF) show a composition bias toward polar residues. The N-acetyltransferase domain maps to 547 to 716 (DRPRLGLDDP…YEAVCRSIQP (170 aa)).

The protein belongs to the acetyltransferase family.

Its subcellular location is the mitochondrion. It carries out the reaction L-glutamate + acetyl-CoA = N-acetyl-L-glutamate + CoA + H(+). It functions in the pathway amino-acid biosynthesis; L-arginine biosynthesis; N(2)-acetyl-L-ornithine from L-glutamate: step 1/4. Functionally, N-acetylglutamate synthase involved in arginine biosynthesis. The sequence is that of Amino-acid acetyltransferase, mitochondrial (arg2) from Aspergillus niger (strain ATCC MYA-4892 / CBS 513.88 / FGSC A1513).